An 82-amino-acid polypeptide reads, in one-letter code: ATP synthase subunit c, chloroplastic (82 aa).

2 helical membrane-spanning segments follow: residues Gly-7–Gly-27 and Leu-57–Ala-77.

It belongs to the ATPase C chain family. F-type ATPases have 2 components, F(1) - the catalytic core - and F(0) - the membrane proton channel. F(1) has five subunits: alpha(3), beta(3), gamma(1), delta(1), epsilon(1). F(0) has four main subunits: a(1), b(1), b'(1) and c(10-14). The alpha and beta chains form an alternating ring which encloses part of the gamma chain. F(1) is attached to F(0) by a central stalk formed by the gamma and epsilon chains, while a peripheral stalk is formed by the delta, b and b' chains.

It localises to the plastid. The protein resides in the chloroplast thylakoid membrane. Its function is as follows. F(1)F(0) ATP synthase produces ATP from ADP in the presence of a proton or sodium gradient. F-type ATPases consist of two structural domains, F(1) containing the extramembraneous catalytic core and F(0) containing the membrane proton channel, linked together by a central stalk and a peripheral stalk. During catalysis, ATP synthesis in the catalytic domain of F(1) is coupled via a rotary mechanism of the central stalk subunits to proton translocation. In terms of biological role, key component of the F(0) channel; it plays a direct role in translocation across the membrane. A homomeric c-ring of between 10-14 subunits forms the central stalk rotor element with the F(1) delta and epsilon subunits. In Emiliania huxleyi (Coccolithophore), this protein is ATP synthase subunit c, chloroplastic.